We begin with the raw amino-acid sequence, 74 residues long: CLAVATA3/ESR (CLE)-related protein 1 (74 aa).

Residues Met1–Ala22 form the signal peptide. N-linked (GlcNAc...) asparagine glycosylation is present at Asn59. Hydroxyproline occurs at positions 66 and 69. O-linked (Ara...) hydroxyproline glycosylation is present at Pro69.

Belongs to the CLV3/ESR signal peptide family. The O-glycosylation (arabinosylation) of the hydroxyproline Pro-69 enhances binding affinity of the CLE1p peptide for its receptor. In terms of tissue distribution, mostly expressed in roots and seedlings, and, to a lower extent, in stems and apex.

It localises to the secreted. The protein localises to the extracellular space. In terms of biological role, extracellular signal peptide that regulates cell fate. This is CLAVATA3/ESR (CLE)-related protein 1 from Arabidopsis thaliana (Mouse-ear cress).